The following is a 398-amino-acid chain: L-rhamnonate dehydratase (398 aa).

2 residues coordinate substrate: His-22 and Arg-48. Positions 214, 241, and 269 each coordinate Mg(2+). His-319 functions as the Proton acceptor in the catalytic mechanism. A substrate-binding site is contributed by Glu-339.

It belongs to the mandelate racemase/muconate lactonizing enzyme family. RhamD subfamily. In terms of assembly, homooctamer; tetramer of dimers. It depends on Mg(2+) as a cofactor.

The catalysed reaction is L-rhamnonate = 2-dehydro-3-deoxy-L-rhamnonate + H2O. In terms of biological role, catalyzes the dehydration of L-rhamnonate to 2-keto-3-deoxy-L-rhamnonate (KDR). The polypeptide is L-rhamnonate dehydratase (Verminephrobacter eiseniae (strain EF01-2)).